Here is a 1044-residue protein sequence, read N- to C-terminus: MAAETLNFGPEWLRALSSGGSVASPPPSPAMPKYKLADYRYGREEMLALYVKENKVPEELQDKEFAAVLQEEPLQPLALEPLTEEEQRNFSLSVNSVAVLRLMGKGAGPPLPATSRGRGSTRSRGRGRGDSCFYQRSIEEGDGAFGRNPREIQRSQSWDDRGERRFEKPARRDGVRSGFEEGGAGPRKEHARSDSENWRSLREEQEDDGSWRLGAGPRRDGDRWRSTSPDGGPRSAGWREHGERRRKFDFDLRGERGGCGEEDGRVGGGNSHLRRCRGLDGFEDDKDGLPEWCLEDEDEEMGTFDASGAFLPLKKGPKEAIPEEQELDFRGLEEEEEEEEEPSEGVDEERPEAGGKEATPLPPPENSSSPSSLPALGPLWTTNEEGGEAVEKELPPAEGDELRGLSLSPRISSPPGPPGDLEDEEGLKHLQQEAEKLVASLQDSSLEEEQFTAAMQTQGLRHSTAATALPLSHGAARKWFYKDPQGEIQGPFTTQEMAEWFQAGYFSMSLLVKRGCDEGFQPLGEVIKMWGRVPFAPGPSPPPLLGNMDQERLKKQQELAAAALYQQLQHQHFLQLVGSRQLPQCTTLREKAAMGDLTPPQQQQLTTFLQQLQALKTPRGGDQNLLPTMSRSLSVPDSGPLWDLHTSASSQSGGEASLWDIPINSSTQGPILEQLQLQHKFQERREVELRAKREEEERKRREEKRRQQQQQQEEQKRRQEEEELFRRKQVRQQELLLKLLQQQQATNVPVPPAPSSPPPLWAGLAKQGLSMKTLLELQMESERQLHKQAAPREPLRAQAPNHRVQLGGLGSAPLNQWVSEAGPLWGGPDKSGGSSGGNLGLWEDTLKSGGSLARSLGLKSSRSSPSLSDSYSHLSGRPVRKKTEEEEKLLKLLQGIPRPQDGFTQWCEQMLHTLSTAGSLDVPMAVAILKEVESPYDVHDYIRSCLGDTLEAKEFAKQFLERRAKQKASQQRQQQQQQQQQQQQEAWLSSTSLQTAFQANHSTKLGPGEGSKAKRRALMLHSDPSILGYSLHGPSGEIESVDDY.

A phosphoserine mark is found at Ser-24, Ser-28, Ser-137, and Ser-157. 2 disordered regions span residues 104–290 and 306–424; these read GKGA…DGLP and ASGA…LEDE. Basic and acidic residues-rich tracts occupy residues 148 to 179 and 186 to 203; these read NPRE…RSGF and PRKE…SLRE. A Phosphoserine modification is found at Ser-228. 2 stretches are compositionally biased toward basic and acidic residues: residues 237 to 265 and 316 to 332; these read GWRE…EDGR and GPKE…FRGL. Over residues 333–350 the composition is skewed to acidic residues; sequence EEEEEEEEEPSEGVDEER. Phosphoserine is present on Ser-343. Over residues 366–379 the composition is skewed to low complexity; sequence NSSSPSSLPALGPL. The span at 389–403 shows a compositional bias: basic and acidic residues; that stretch reads AVEKELPPAEGDELR. Ser-408 is subject to Phosphoserine. The 49-residue stretch at 476–524 folds into the GYF domain; that stretch reads ARKWFYKDPQGEIQGPFTTQEMAEWFQAGYFSMSLLVKRGCDEGFQPLG. A phosphoserine mark is found at Ser-540 and Ser-634. Residues 692–706 are compositionally biased toward basic and acidic residues; it reads KREEEERKRREEKRR. Disordered regions lie at residues 692–721, 820–842, 855–883, 966–987, 1000–1019, and 1024–1044; these read KREE…RQEE, EAGP…LGLW, SLGL…RKKT, QKAS…QEAW, NHST…RALM, and PSIL…VDDY. Gly residues predominate over residues 829–839; it reads DKSGGSSGGNL. Low complexity-rich tracts occupy residues 855–877 and 970–984; these read SLGL…LSGR and QQRQ…QQQQ. Position 863 is a phosphoserine (Ser-863).

This sequence belongs to the GIGYF family. In terms of assembly, interacts with GRB10. This transient binding is increased under IGF1 stimulation and leads to recruitment of GIGYF1/GRB10 complex to IGF1 receptor. Interacts with DDX6. As to expression, ubiquitous. Lower expression in skeletal muscle, liver and testis.

May act cooperatively with GRB10 to regulate tyrosine kinase receptor signaling. May increase IGF1 receptor phosphorylation under IGF1 stimulation as well as phosphorylation of IRS1 and SHC1. The sequence is that of GRB10-interacting GYF protein 1 (Gigyf1) from Mus musculus (Mouse).